Reading from the N-terminus, the 166-residue chain is Endoribonuclease YbeY (166 aa).

Residues histidine 132, histidine 136, and histidine 142 each contribute to the Zn(2+) site.

Belongs to the endoribonuclease YbeY family. Zn(2+) serves as cofactor.

The protein localises to the cytoplasm. Functionally, single strand-specific metallo-endoribonuclease involved in late-stage 70S ribosome quality control and in maturation of the 3' terminus of the 16S rRNA. This chain is Endoribonuclease YbeY, found in Clostridium botulinum (strain Loch Maree / Type A3).